We begin with the raw amino-acid sequence, 627 residues long: Threonine--tRNA ligase (627 aa).

Residues 1–147 are editing domain; the sequence is MRMLLIHSDY…TIVPSGEAKA (147 aa). Residues 208–507 are catalytic; sequence PHVRIMLEQE…QSKGIKPMFP (300 aa). Zn(2+) is bound by residues cysteine 300, histidine 352, and histidine 476.

The protein belongs to the class-II aminoacyl-tRNA synthetase family. As to quaternary structure, homodimer. Zn(2+) serves as cofactor.

It localises to the cytoplasm. It carries out the reaction tRNA(Thr) + L-threonine + ATP = L-threonyl-tRNA(Thr) + AMP + diphosphate + H(+). Functionally, catalyzes the attachment of threonine to tRNA(Thr) in a two-step reaction: L-threonine is first activated by ATP to form Thr-AMP and then transferred to the acceptor end of tRNA(Thr). Also edits incorrectly charged L-seryl-tRNA(Thr). The protein is Threonine--tRNA ligase of Thermococcus onnurineus (strain NA1).